Reading from the N-terminus, the 415-residue chain is Citrate (Re)-synthase (415 aa).

One can recognise a Pyruvate carboxyltransferase domain in the interval 4-275 (IFIIDVTNRD…GHEVDLSKAW (272 aa)).

It belongs to the alpha-IPM synthase/homocitrate synthase family. Mn(2+) serves as cofactor.

The catalysed reaction is oxaloacetate + acetyl-CoA + H2O = citrate + CoA + H(+). Its activity is regulated as follows. Inhibited by citrate and under aerobic conditions. Catalyzes the condensation of the acetyl group of acetyl coenzyme A (acetyl-CoA) with oxaloacetate to form citrate. This enzyme is highly Re-face stereospecific with respect to the C-2 of oxaloacetate. The protein is Citrate (Re)-synthase of Dehalococcoides mccartyi (strain CBDB1).